The primary structure comprises 515 residues: Alpha-1B adrenergic receptor (515 aa).

At M1–A45 the chain is on the extracellular side. Residues N10, N24, and N34 are each glycosylated (N-linked (GlcNAc...) asparagine). The helical transmembrane segment at I46 to V70 threads the bilayer. Residues A71–F83 lie on the Cytoplasmic side of the membrane. Residues I84–L105 traverse the membrane as a helical segment. Topologically, residues E106–R115 are extracellular. A helical membrane pass occupies residues I116–I141. A disulfide bridge links C118 with C195. Topologically, residues D142–K161 are cytoplasmic. A helical transmembrane segment spans residues A162–W184. Over K185–P201 the chain is Extracellular. The chain crosses the membrane as a helical span at residues F202–C224. The Cytoplasmic portion of the chain corresponds to R225–T295. Phosphothreonine is present on T264. A helical membrane pass occupies residues L296–L319. Residues F320–P326 are Extracellular-facing. A helical transmembrane segment spans residues D327–S351. The Cytoplasmic portion of the chain corresponds to S352–F515. The S-palmitoyl cysteine moiety is linked to residue C365. A Nuclear localization signal motif is present at residues R368 to R378. Disordered regions lie at residues G392 to Y428 and L473 to F515. Residues S410–P424 are compositionally biased toward polar residues.

This sequence belongs to the G-protein coupled receptor 1 family. Adrenergic receptor subfamily. ADRA1B sub-subfamily. As to quaternary structure, homo- and heterooligomer. Heterooligomerizes with ADRA1B homooligomers in cardiac myocytes. Interacts with CAVIN4.

It is found in the nucleus membrane. It localises to the cell membrane. Its subcellular location is the cytoplasm. The protein localises to the membrane. The protein resides in the caveola. In terms of biological role, this alpha-adrenergic receptor mediates its action by association with G proteins that activate a phosphatidylinositol-calcium second messenger system. Its effect is mediated by G(q) and G(11) proteins. Nuclear ADRA1A-ADRA1B heterooligomers regulate phenylephrine (PE)-stimulated ERK signaling in cardiac myocytes. This chain is Alpha-1B adrenergic receptor (ADRA1B), found in Mesocricetus auratus (Golden hamster).